The chain runs to 92 residues: Probable Fe(2+)-trafficking protein (92 aa).

Belongs to the Fe(2+)-trafficking protein family.

In terms of biological role, could be a mediator in iron transactions between iron acquisition and iron-requiring processes, such as synthesis and/or repair of Fe-S clusters in biosynthetic enzymes. The protein is Probable Fe(2+)-trafficking protein of Xanthomonas campestris pv. campestris (strain 8004).